A 506-amino-acid chain; its full sequence is Cobyric acid synthase (506 aa).

Residues D254–F453 form the GATase cobBQ-type domain. C334 acts as the Nucleophile in catalysis. Residue H445 is part of the active site.

This sequence belongs to the CobB/CobQ family. CobQ subfamily.

Its pathway is cofactor biosynthesis; adenosylcobalamin biosynthesis. Functionally, catalyzes amidations at positions B, D, E, and G on adenosylcobyrinic A,C-diamide. NH(2) groups are provided by glutamine, and one molecule of ATP is hydrogenolyzed for each amidation. This is Cobyric acid synthase from Dehalococcoides mccartyi (strain ATCC BAA-2266 / KCTC 15142 / 195) (Dehalococcoides ethenogenes (strain 195)).